The following is a 142-amino-acid chain: Type 3 secretion system pilotin (142 aa).

Positions methionine 1–glycine 23 are cleaved as a signal peptide. The N-palmitoyl cysteine moiety is linked to residue cysteine 24. Cysteine 24 is lipidated: S-diacylglycerol cysteine.

Belongs to the MxiM family. Monomer. Interacts with the secretin MxiD/SctC.

Its subcellular location is the cell outer membrane. In terms of biological role, involved in the synthesis of the type III secretion system (T3SS), also called injectisome, which is used to inject bacterial effector proteins into eukaryotic host cells. Pilot protein that is required for the proper localization of the secretin MxiD/SctC in the outer membrane. Also influences both MxiD/SctC multimerization and stability. Required for both Ipa translocation and tissue culture cell invasion. Binds lipids. The sequence is that of Type 3 secretion system pilotin from Shigella flexneri.